Here is a 324-residue protein sequence, read N- to C-terminus: Glycerol-3-phosphate dehydrogenase [NAD(P)+] (324 aa).

Residues Phe11, Arg31, and Lys107 each coordinate NADPH. Residues Lys107 and Gly135 each coordinate sn-glycerol 3-phosphate. Ala139 provides a ligand contact to NADPH. Residues Lys190, Asp245, Ser255, Arg256, and Asn257 each coordinate sn-glycerol 3-phosphate. Lys190 serves as the catalytic Proton acceptor. Position 256 (Arg256) interacts with NADPH. Residues Val278 and Glu279 each contribute to the NADPH site.

It belongs to the NAD-dependent glycerol-3-phosphate dehydrogenase family.

The protein resides in the cytoplasm. The enzyme catalyses sn-glycerol 3-phosphate + NAD(+) = dihydroxyacetone phosphate + NADH + H(+). It catalyses the reaction sn-glycerol 3-phosphate + NADP(+) = dihydroxyacetone phosphate + NADPH + H(+). The protein operates within membrane lipid metabolism; glycerophospholipid metabolism. In terms of biological role, catalyzes the reduction of the glycolytic intermediate dihydroxyacetone phosphate (DHAP) to sn-glycerol 3-phosphate (G3P), the key precursor for phospholipid synthesis. The sequence is that of Glycerol-3-phosphate dehydrogenase [NAD(P)+] from Anaplasma phagocytophilum (strain HZ).